Reading from the N-terminus, the 227-residue chain is Threonine--tRNA ligase (227 aa).

The catalytic stretch occupies residues 1–120; the sequence is DIELKLSTRP…LIEHYEGAFP (120 aa).

It belongs to the class-II aminoacyl-tRNA synthetase family. As to quaternary structure, homodimer.

It is found in the cytoplasm. It carries out the reaction tRNA(Thr) + L-threonine + ATP = L-threonyl-tRNA(Thr) + AMP + diphosphate + H(+). Catalyzes the attachment of threonine to tRNA(Thr) in a two-step reaction: L-threonine is first activated by ATP to form Thr-AMP and then transferred to the acceptor end of tRNA(Thr). Also edits incorrectly charged L-seryl-tRNA(Thr). The chain is Threonine--tRNA ligase from Pseudomonas syringae pv. syringae.